Consider the following 108-residue polypeptide: CRISPR-associated endoribonuclease Cas2 (108 aa).

Mg(2+) is bound at residue D15.

Belongs to the CRISPR-associated endoribonuclease Cas2 protein family. As to quaternary structure, homodimer, forms a heterotetramer with a Cas1 homodimer. It depends on Mg(2+) as a cofactor.

CRISPR (clustered regularly interspaced short palindromic repeat), is an adaptive immune system that provides protection against mobile genetic elements (viruses, transposable elements and conjugative plasmids). CRISPR clusters contain sequences complementary to antecedent mobile elements and target invading nucleic acids. CRISPR clusters are transcribed and processed into CRISPR RNA (crRNA). Functions as a ssRNA-specific endoribonuclease. Involved in the integration of spacer DNA into the CRISPR cassette. The chain is CRISPR-associated endoribonuclease Cas2 from Paracidovorax avenae (strain ATCC 19860 / DSM 7227 / CCUG 15838 / JCM 20985 / LMG 2117 / NCPPB 1011) (Acidovorax avenae).